The following is a 962-amino-acid chain: IQ motif and SEC7 domain-containing protein 1 (962 aa).

Residues 1 to 96 are disordered; the sequence is MACRRRYLSS…STSVLRKQAE (96 aa). The segment covering 8–19 has biased composition (low complexity); sequence LSSLETGSSLST. Positions 30 to 39 are enriched in polar residues; it reads SSETGTSLDS. A phosphoserine mark is found at S89, S105, and S107. Positions 134–163 constitute an IQ domain; that stretch reads TRHAARTIQTAFRQYQMNKNFERLRSSMSE. Residues S180, S248, and S252 each carry the phosphoserine modification. Disordered stretches follow at residues 264–292, 311–333, and 348–516; these read SEEVPASDTARARDTEPKPGLHGMDHRKL, LSPPLPLSQAGDRPSSTESDLRL, and KEDK…DSPA. Residues 273–292 show a composition bias toward basic and acidic residues; the sequence is ARARDTEPKPGLHGMDHRKL. Composition is skewed to basic and acidic residues over residues 365 to 375 and 429 to 445; these read ERPEPRLRVEH and LPREEPELRPRPPRPLE. The segment covering 470–488 has biased composition (low complexity); sequence DSINSTSNSNDTINCSSES. A phosphoserine mark is found at S511 and S514. The SEC7 domain occupies 516-709; it reads AFSNDVIRKR…IGIYERIRKR (194 aa). One can recognise a PH domain in the interval 773–865; the sequence is HQREIFLFND…LRESVAEVQE (93 aa). Position 891 is a phosphoserine (S891). A Phosphotyrosine modification is found at Y910. A disordered region spans residues 921-962; that stretch reads LSSSLRDLSEAGKRGRRSSAGSLESNVEFQPFQPSQPPVLCS. Phosphoserine occurs at positions 923 and 924. Positions 939 to 948 are enriched in polar residues; sequence SAGSLESNVE.

The protein belongs to the BRAG family. Interacts with ARF1 and ARF6. Interacts with GRIA2; the interaction is required for ARF6 activation.

It is found in the cytoplasm. The protein resides in the nucleus. Its subcellular location is the postsynaptic density. The protein localises to the cytoplasmic vesicle. It localises to the secretory vesicle. It is found in the synaptic vesicle. In terms of biological role, guanine nucleotide exchange factor for ARF1 and ARF6. Guanine nucleotide exchange factor activity is enhanced by lipid binding. Accelerates GTP binding by ARFs of all three classes. Guanine nucleotide exchange protein for ARF6, mediating internalization of beta-1 integrin. Involved in neuronal development. In neurons, plays a role in the control of vesicle formation by endocytoc cargo. Upon long term depression, interacts with GRIA2 and mediates the activation of ARF6 to internalize synaptic AMPAR receptors. The protein is IQ motif and SEC7 domain-containing protein 1 of Rattus norvegicus (Rat).